A 236-amino-acid chain; its full sequence is Endonuclease NucS (236 aa).

This sequence belongs to the NucS endonuclease family.

The protein localises to the cytoplasm. In terms of biological role, cleaves both 3' and 5' ssDNA extremities of branched DNA structures. This chain is Endonuclease NucS, found in Saccharolobus solfataricus (strain ATCC 35092 / DSM 1617 / JCM 11322 / P2) (Sulfolobus solfataricus).